A 67-amino-acid polypeptide reads, in one-letter code: DNA-directed RNA polymerase subunit omega (67 aa).

This sequence belongs to the RNA polymerase subunit omega family. The RNAP catalytic core consists of 2 alpha, 1 beta, 1 beta' and 1 omega subunit. When a sigma factor is associated with the core the holoenzyme is formed, which can initiate transcription.

It catalyses the reaction RNA(n) + a ribonucleoside 5'-triphosphate = RNA(n+1) + diphosphate. In terms of biological role, promotes RNA polymerase assembly. Latches the N- and C-terminal regions of the beta' subunit thereby facilitating its interaction with the beta and alpha subunits. The chain is DNA-directed RNA polymerase subunit omega from Nitrosomonas eutropha (strain DSM 101675 / C91 / Nm57).